A 404-amino-acid polypeptide reads, in one-letter code: GID complex subunit 9 (404 aa).

Residues 116–148 (SRVRLNRLVADYMMANGYHGAAALLCKDSQLEN) enclose the LisH domain. Residues 154–211 (IYKRYQLIHDSILQQELKEVLSWCSEHRAILKKNNSTLELEVRLQRFIELIKSKKLCQ) enclose the CTLH domain. The RING-Gid-type zinc finger occupies 317-389 (CPVCTPCLND…REGFLRDPYS (73 aa)).

This sequence belongs to the FYV10 family. Identified in the GID/CTLH complex. In the absence of stress, the complex exists as an inactive anticipatory complex (GID(Ant)), composed of Gid1, the E3 ubiquitin-ligase Gid2, Gid5, Gid8, and the RING-like subunit Gid9, awaiting a substrate receptor to form the active E3 ligase complex. When cells are shifted to glucose-containing medium, the substrate receptor Gid4 is induced and becomes part of the complex, named GID(SR4). Additionally, Gid7 transforms the GID(SR4) E3 ligase core into a higher-order supramolecular assembly (Chelator-GID(SR4)). Under osmotic or heat stress, the substrate receptor Gid10 is induced and becomes part of the complex, named GID(SR10).

The protein localises to the cytoplasm. The protein resides in the nucleus. The enzyme catalyses S-ubiquitinyl-[E2 ubiquitin-conjugating enzyme]-L-cysteine + [acceptor protein]-L-lysine = [E2 ubiquitin-conjugating enzyme]-L-cysteine + N(6)-ubiquitinyl-[acceptor protein]-L-lysine.. The protein operates within protein modification; protein ubiquitination. Its function is as follows. Component of the GID E3 ligase complex recruiting N termini and catalyzing ubiquitination of proteins targeted for degradation. GID E3 is regulated through assembly with interchangeable N-degron-binding substrate receptors induced by distinct environmental perturbations. Required for the adaptation to the presence of glucose in the growth medium; mediates in association with the substrate receptor VID24/GID4 the degradation of enzymes involved in gluconeogenesis when cells are shifted to glucose-containing medium. This chain is GID complex subunit 9 (gid9), found in Schizosaccharomyces pombe (strain 972 / ATCC 24843) (Fission yeast).